Here is a 366-residue protein sequence, read N- to C-terminus: Isocitrate dehydrogenase [NAD] subunit alpha, mitochondrial (366 aa).

A mitochondrion-targeting transit peptide spans 1–27 (MAGPAWISKVSRLLGAFHNPKQVTRGF). At Lys77 the chain carries N6-succinyllysine. A Phosphothreonine modification is found at Thr101. 3 residues coordinate substrate: Arg115, Arg125, and Arg146. N6-acetyllysine is present on Lys223. Mg(2+) is bound by residues Asp233, Asp257, and Asp261. N6-acetyllysine; alternate is present on Lys343. At Lys343 the chain carries N6-succinyllysine; alternate. Residue Lys350 is modified to N6-succinyllysine.

It belongs to the isocitrate and isopropylmalate dehydrogenases family. As to quaternary structure, heterooligomer of subunits alpha (IDH3A), beta (IDH3B), and gamma (IDH3G) in the apparent ratio of 2:1:1. The heterodimer containing one IDH3A and one IDH3B subunit and the heterodimer containing one IDH3A and one IDH3G subunit assemble into a heterotetramer (which contains two subunits of IDH3A, one of IDH3B and one of IDH3G) and further into the heterooctamer. Mg(2+) is required as a cofactor. The cofactor is Mn(2+).

The protein localises to the mitochondrion. The enzyme catalyses D-threo-isocitrate + NAD(+) = 2-oxoglutarate + CO2 + NADH. The heterotetramer and the heterodimer composed of IDH3A and IDH3G subunits can be allosterically activated by citrate (CIT) or/and ADP, and the two activators can act independently or synergistically. The heterodimer composed of IDH3A and IDH3B subunits cannot be allosterically regulated and the allosteric regulation of the heterotetramer is through the IDH3G subunit and not the IDH3B subunit. The IDH3G subunit contains the allosteric site which consists of a CIT-binding site and an ADP-binding site, and the binding of CIT and ADP causes conformational changes at the allosteric site which are transmitted to the active site in the catalytic subunit (IDH3A) through a cascade of conformational changes at the heterodimer interface, leading to stabilization of the isocitrate-binding at the active site and thus activation of the enzyme. ATP can activate the heterotetramer and the heterodimer composed of IDH3A and IDH3G subunits at low concentrations but inhibits their activities at high concentrations, whereas ATP exhibits only inhibitory effect on the heterodimer composed of IDH3A and IDH3B subunits. In terms of biological role, catalytic subunit of the enzyme which catalyzes the decarboxylation of isocitrate (ICT) into alpha-ketoglutarate. The heterodimer composed of the alpha (IDH3A) and beta (IDH3B) subunits and the heterodimer composed of the alpha (IDH3A) and gamma (IDH3G) subunits, have considerable basal activity but the full activity of the heterotetramer (containing two subunits of IDH3A, one of IDH3B and one of IDH3G) requires the assembly and cooperative function of both heterodimers. This is Isocitrate dehydrogenase [NAD] subunit alpha, mitochondrial from Pongo abelii (Sumatran orangutan).